We begin with the raw amino-acid sequence, 247 residues long: Segregation and condensation protein A (247 aa).

Belongs to the ScpA family. As to quaternary structure, component of a cohesin-like complex composed of ScpA, ScpB and the Smc homodimer, in which ScpA and ScpB bind to the head domain of Smc. The presence of the three proteins is required for the association of the complex with DNA.

The protein localises to the cytoplasm. Functionally, participates in chromosomal partition during cell division. May act via the formation of a condensin-like complex containing Smc and ScpB that pull DNA away from mid-cell into both cell halves. The polypeptide is Segregation and condensation protein A (Bacillus cereus (strain ATCC 10987 / NRS 248)).